The sequence spans 279 residues: Dermonecrotic toxin LbSicTox-alphaIB1a (279 aa).

His11 is a catalytic residue. Residues Glu31 and Asp33 each contribute to the Mg(2+) site. Residue His47 is the Nucleophile of the active site. 2 disulfides stabilise this stretch: Cys51–Cys57 and Cys53–Cys196. Residue Asp91 coordinates Mg(2+).

The protein belongs to the arthropod phospholipase D family. Class II subfamily. Class IIa sub-subfamily. The cofactor is Mg(2+). Expressed by the venom gland.

The protein localises to the secreted. It carries out the reaction an N-(acyl)-sphingosylphosphocholine = an N-(acyl)-sphingosyl-1,3-cyclic phosphate + choline. The catalysed reaction is an N-(acyl)-sphingosylphosphoethanolamine = an N-(acyl)-sphingosyl-1,3-cyclic phosphate + ethanolamine. The enzyme catalyses a 1-acyl-sn-glycero-3-phosphocholine = a 1-acyl-sn-glycero-2,3-cyclic phosphate + choline. It catalyses the reaction a 1-acyl-sn-glycero-3-phosphoethanolamine = a 1-acyl-sn-glycero-2,3-cyclic phosphate + ethanolamine. Dermonecrotic toxins cleave the phosphodiester linkage between the phosphate and headgroup of certain phospholipids (sphingolipid and lysolipid substrates), forming an alcohol (often choline) and a cyclic phosphate. This toxin acts on sphingomyelin (SM) with high activity (about 30.5-31.5 U/mg). It may also act on ceramide phosphoethanolamine (CPE), lysophosphatidylcholine (LPC) and lysophosphatidylethanolamine (LPE), but not on lysophosphatidylserine (LPS), and lysophosphatidylglycerol (LPG). It acts by transphosphatidylation, releasing exclusively cyclic phosphate products as second products. Induces dermonecrosis, hemolysis, increased vascular permeability, edema, inflammatory response, and platelet aggregation. Is lethal to mice. This chain is Dermonecrotic toxin LbSicTox-alphaIB1a, found in Loxosceles boneti (North American fiddleback spider).